The following is a 637-amino-acid chain: Chaperone protein HtpG (637 aa).

The interval 1–345 (MTAAQKETLG…SNDLPLNVSR (345 aa)) is a; substrate-binding. The b stretch occupies residues 346 to 562 (EILQDNKVTQ…DNDMSSQMQK (217 aa)). The segment at 563–637 (LMESVGQAAP…LNKLMLELSK (75 aa)) is c.

The protein belongs to the heat shock protein 90 family. In terms of assembly, homodimer.

The protein localises to the cytoplasm. In terms of biological role, molecular chaperone. Has ATPase activity. The chain is Chaperone protein HtpG from Pseudoalteromonas translucida (strain TAC 125).